A 224-amino-acid polypeptide reads, in one-letter code: UPF0758 protein mma_2551 (224 aa).

The 123-residue stretch at Ser102–Leu224 folds into the MPN domain. Zn(2+) contacts are provided by His173, His175, and Asp186. The JAMM motif signature appears at His173–Asp186.

This sequence belongs to the UPF0758 family.

The polypeptide is UPF0758 protein mma_2551 (Janthinobacterium sp. (strain Marseille) (Minibacterium massiliensis)).